Reading from the N-terminus, the 919-residue chain is Plasma membrane ATPase 1 (919 aa).

Over residues 1 to 16 (MADNAGEYHDAEKHAP) the composition is skewed to basic and acidic residues. The interval 1-73 (MADNAGEYHD…APAAGEAKAV (73 aa)) is disordered. Residues 1–113 (MADNAGEYHD…KEELENPFLK (113 aa)) lie on the Cytoplasmic side of the membrane. Residues 34–63 (QDDEPDDDIDALIEELFSEDVQEEQEDNDD) are compositionally biased toward acidic residues. S89 is modified (phosphoserine). A helical transmembrane segment spans residues 114-134 (FIMFFVGPIQFVMEMAAALAA). Residues 135-138 (GLRD) lie on the Extracellular side of the membrane. The chain crosses the membrane as a helical span at residues 139 to 158 (WVDFGVICALLMLNAVVGFV). The Cytoplasmic portion of the chain corresponds to 159–289 (QEYQAGSIVD…GTGHFTEVLN (131 aa)). A helical membrane pass occupies residues 290 to 311 (GIGTILLVLVLLTLFCIYTAAF). The Extracellular portion of the chain corresponds to 312-322 (YRSVRLARLLE). The chain crosses the membrane as a helical span at residues 323–345 (YTLAITIIGVPVGLPAVVTTTMA). Topologically, residues 346 to 717 (VGAAYLAEKQ…LIIRNQLLNL (372 aa)) are cytoplasmic. D376 acts as the 4-aspartylphosphate intermediate in catalysis. S494 is modified (phosphoserine). D632 and D636 together coordinate Mg(2+). Residues 718–736 (ELVVFIAIFADVATLAIAY) form a helical membrane-spanning segment. Topologically, residues 737 to 752 (DNAPYSMKPVKWNLPR) are extracellular. The chain crosses the membrane as a helical span at residues 753 to 772 (LWGLSTVIGIVLAIGTWITN). Over 773-824 (TTMIAQGQNRGIVQNFGVQDEVLFLEISLTENWLIFVTRCNGPFWSSIPSWQ) the chain is Cytoplasmic. Residues 825-845 (LSGAVLAVDILATMFCIFGWF) form a helical membrane-spanning segment. Residues 846-858 (KGGHQTSIVAVLR) are Extracellular-facing. A helical membrane pass occupies residues 859 to 875 (IWMYSFGIFCIMAGTYY). Residues 876-919 (ILSESAGFDRMMNGKPKESRNQRSIEDLVVALQRTSTRHEKGDA) are Cytoplasmic-facing. At S899 the chain carries Phosphoserine.

It belongs to the cation transport ATPase (P-type) (TC 3.A.3) family. Type IIIA subfamily.

The protein resides in the cell membrane. It catalyses the reaction ATP + H2O + H(+)(in) = ADP + phosphate + 2 H(+)(out). Functionally, the plasma membrane ATPase of plants and fungi is a hydrogen ion pump. The proton gradient it generates drives the active transport of nutrients by H(+)-symport. The resulting external acidification and/or internal alkinization may mediate growth responses. This is Plasma membrane ATPase 1 (pma1) from Schizosaccharomyces pombe (strain 972 / ATCC 24843) (Fission yeast).